A 1617-amino-acid chain; its full sequence is ATP-binding cassette sub-family A member 6 (1617 aa).

Residues 31–51 (LLEWGLSILLGLCIALFSSSM) form a helical membrane-spanning segment. N-linked (GlcNAc...) asparagine glycosylation is found at Asn84 and Asn109. The next 6 membrane-spanning stretches (helical) occupy residues 222–242 (MFIL…SLNV), 268–288 (GLIY…IITF), 297–317 (FMVI…LVFL), 327–347 (LTNL…FTVF), 355–375 (LEWI…IQII), and 397–417 (IATF…ALYF). The ABC transporter 1 domain occupies 478–713 (IRIRNVKKEY…WGLGYHLSLH (236 aa)). 514 to 521 (GHSGAGKS) is a binding site for ATP. A helical transmembrane segment spans residues 854 to 874 (VLLTLLLVFGIAIFPLIVENI). An N-linked (GlcNAc...) asparagine glycan is attached at Asn940. 6 helical membrane-spanning segments follow: residues 1007–1027 (IGLW…LCSI), 1062–1082 (ALVD…IFYI), 1094–1114 (IVFA…FFIY), 1127–1147 (SGLW…ITLI), 1150–1170 (FDLS…LLGF), and 1194–1214 (ATDF…VFVL). The ABC transporter 2 domain maps to 1288–1513 (GQKKSCFSKR…LGKDYILELK (226 aa)). 1320–1327 (GPNGAGKS) provides a ligand contact to ATP.

This sequence belongs to the ABC transporter superfamily. ABCA family. As to expression, widely expressed with higher expression in liver.

Its subcellular location is the golgi apparatus membrane. Its function is as follows. Probable transporter which may play a role in macrophage lipid transport and homeostasis. In Homo sapiens (Human), this protein is ATP-binding cassette sub-family A member 6 (ABCA6).